A 49-amino-acid polypeptide reads, in one-letter code: Chitin-binding lectin (49 aa).

In terms of domain architecture, Chitin-binding type-1 spans 2-45 (DHRCGREATPPGKLCNDGRCCSQWGWCGTTQAYCSGKCQSQCDC). 4 disulfide bridges follow: Cys5-Cys22, Cys16-Cys28, Cys21-Cys35, and Cys39-Cys43.

Homodimer; disulfide-linked.

Chitin-binding lectin which is specific for N-acetylglucosamine oligomers. This is Chitin-binding lectin from Viscum album (European mistletoe).